Reading from the N-terminus, the 154-residue chain is Ribosome maturation factor RimP (154 aa).

This sequence belongs to the RimP family.

Its subcellular location is the cytoplasm. Required for maturation of 30S ribosomal subunits. In Acetivibrio thermocellus (strain ATCC 27405 / DSM 1237 / JCM 9322 / NBRC 103400 / NCIMB 10682 / NRRL B-4536 / VPI 7372) (Clostridium thermocellum), this protein is Ribosome maturation factor RimP.